The following is a 178-amino-acid chain: Ribosome maturation factor RimM (178 aa).

One can recognise a PRC barrel domain in the interval 100-178 (TDGEYYWYQL…EMKVEWDADF (79 aa)).

The protein belongs to the RimM family. Binds ribosomal protein uS19.

It is found in the cytoplasm. Its function is as follows. An accessory protein needed during the final step in the assembly of 30S ribosomal subunit, possibly for assembly of the head region. Essential for efficient processing of 16S rRNA. May be needed both before and after RbfA during the maturation of 16S rRNA. It has affinity for free ribosomal 30S subunits but not for 70S ribosomes. The sequence is that of Ribosome maturation factor RimM from Pseudomonas fluorescens (strain SBW25).